Reading from the N-terminus, the 146-residue chain is Hemoglobin subunit beta (146 aa).

In terms of domain architecture, Globin spans 2–146 (HWTETERATI…VVAALSREYH (145 aa)). Heme b contacts are provided by His63 and His92.

The protein belongs to the globin family. Heterotetramer of two alpha chains and two beta chains (an easy dimerization is also reported). In terms of tissue distribution, red blood cells.

Involved in oxygen transport from the lung to the various peripheral tissues. The sequence is that of Hemoglobin subunit beta (HBB) from Latimeria chalumnae (Coelacanth).